Here is a 338-residue protein sequence, read N- to C-terminus: Trace amine-associated receptor 1 (338 aa).

Residues M1–S24 lie on the Extracellular side of the membrane. 3 disulfide bridges follow: C4–C177, C12–C87, and C95–C181. Residues N9 and N16 are each glycosylated (N-linked (GlcNAc...) asparagine). Residues L25–V45 traverse the membrane as a helical segment. Over S46–N58 the chain is Cytoplasmic. The chain crosses the membrane as a helical span at residues W59–S79. The Extracellular portion of the chain corresponds to M80–I97. Residues H98–I118 traverse the membrane as a helical segment. D102 lines the 2-phenylethylamine pocket. At D119 to N135 the chain is on the cytoplasmic side. A helical transmembrane segment spans residues I136–G156. At M157–K187 the chain is on the extracellular side. Residues I188–I208 traverse the membrane as a helical segment. Residues Y209–T251 lie on the Cytoplasmic side of the membrane. Residues L252–I272 traverse the membrane as a helical segment. Over D273–D286 the chain is Extracellular. A helical membrane pass occupies residues V287–Y307. The Cytoplasmic segment spans residues P308–S338.

The protein belongs to the G-protein coupled receptor 1 family.

The protein localises to the endomembrane system. Its subcellular location is the endoplasmic reticulum membrane. It is found in the cell membrane. In terms of biological role, intracellular G-protein coupled receptor for trace amines, which recognizes endogenous amine-containing metabolites such as beta-phenylethylamine (beta-PEA), 3-iodothyronamine (T1AM), isoamylamine (IAA), cadaverine (CAD), cyclohexylamine (CHA), p-tyramine (p-TYR), trimethylamine (TMA), octopamine and tryptamine. Also functions as a receptor for various drugs and psychoactive substances, such as amphetamine and methamphetamine. Unresponsive to classical biogenic amines, such as epinephrine and histamine and only partially activated by dopamine and serotonin. Expressed in both the central and peripheral nervous system: TAAR1 activation regulates the activity of several neurotransmitter signaling pathways by (1) decreasing the basal firing rates of the neurons involved and by (2) lowering the sensitivity of receptors to neurotransmitters. Ligand binding causes a conformation change that triggers signaling via guanine nucleotide-binding proteins (G proteins) and modulates the activity of downstream effectors. TAAR1 is coupled with different G(i)/G(o)-, G(s)- or G(q)/G(11) classes of G alpha proteins depending on the ligand. CAD-binding is coupled to G(i)/G(o) G alpha proteins and mediates inhibition of adenylate cyclase activity. T1AM- or beta-PEA-binding is coupled to G(s) G alpha proteins and mediates activation of adenylate cyclase activity. CHA- or IAA-binding is coupled to G(q)/G(11) G alpha proteins and activates phospholipase C-beta, releasing diacylglycerol (DAG) and inositol 1,4,5-trisphosphate (IP3) second messengers. TMA-binding is coupled with all three G(i)/G(o)-, G(s)- or G(q)/G(11) G alpha protein subtypes. The protein is Trace amine-associated receptor 1 (TAAR1) of Macaca mulatta (Rhesus macaque).